A 272-amino-acid chain; its full sequence is Putative pyruvate, phosphate dikinase regulatory protein (272 aa).

Residue 153-160 (GVSRTSKT) coordinates ADP.

The protein belongs to the pyruvate, phosphate/water dikinase regulatory protein family. PDRP subfamily.

It carries out the reaction N(tele)-phospho-L-histidyl/L-threonyl-[pyruvate, phosphate dikinase] + ADP = N(tele)-phospho-L-histidyl/O-phospho-L-threonyl-[pyruvate, phosphate dikinase] + AMP + H(+). The enzyme catalyses N(tele)-phospho-L-histidyl/O-phospho-L-threonyl-[pyruvate, phosphate dikinase] + phosphate + H(+) = N(tele)-phospho-L-histidyl/L-threonyl-[pyruvate, phosphate dikinase] + diphosphate. Bifunctional serine/threonine kinase and phosphorylase involved in the regulation of the pyruvate, phosphate dikinase (PPDK) by catalyzing its phosphorylation/dephosphorylation. The chain is Putative pyruvate, phosphate dikinase regulatory protein from Chelativorans sp. (strain BNC1).